The chain runs to 201 residues: Adenylyl-sulfate kinase (201 aa).

Residue 35-42 (GLSGSGKS) participates in ATP binding. S109 functions as the Phosphoserine intermediate in the catalytic mechanism.

It belongs to the APS kinase family.

The catalysed reaction is adenosine 5'-phosphosulfate + ATP = 3'-phosphoadenylyl sulfate + ADP + H(+). It participates in sulfur metabolism; hydrogen sulfide biosynthesis; sulfite from sulfate: step 2/3. In terms of biological role, catalyzes the synthesis of activated sulfate. The protein is Adenylyl-sulfate kinase of Salmonella arizonae (strain ATCC BAA-731 / CDC346-86 / RSK2980).